The following is a 103-amino-acid chain: Phosphoribosyl-ATP pyrophosphatase (103 aa).

This sequence belongs to the PRA-PH family.

The protein resides in the cytoplasm. It carries out the reaction 1-(5-phospho-beta-D-ribosyl)-ATP + H2O = 1-(5-phospho-beta-D-ribosyl)-5'-AMP + diphosphate + H(+). It participates in amino-acid biosynthesis; L-histidine biosynthesis; L-histidine from 5-phospho-alpha-D-ribose 1-diphosphate: step 2/9. The polypeptide is Phosphoribosyl-ATP pyrophosphatase (Cereibacter sphaeroides (strain ATCC 17029 / ATH 2.4.9) (Rhodobacter sphaeroides)).